The chain runs to 560 residues: Dihydroxy-acid dehydratase (560 aa).

Cys-50 is a binding site for [2Fe-2S] cluster. Asp-82 is a Mg(2+) binding site. Cys-123 contacts [2Fe-2S] cluster. Mg(2+)-binding residues include Asp-124 and Lys-125. An N6-carboxylysine modification is found at Lys-125. Residue Cys-195 participates in [2Fe-2S] cluster binding. Glu-446 serves as a coordination point for Mg(2+). Residue Ser-472 is the Proton acceptor of the active site.

The protein belongs to the IlvD/Edd family. As to quaternary structure, homodimer. [2Fe-2S] cluster serves as cofactor. Mg(2+) is required as a cofactor.

The catalysed reaction is (2R)-2,3-dihydroxy-3-methylbutanoate = 3-methyl-2-oxobutanoate + H2O. It carries out the reaction (2R,3R)-2,3-dihydroxy-3-methylpentanoate = (S)-3-methyl-2-oxopentanoate + H2O. The protein operates within amino-acid biosynthesis; L-isoleucine biosynthesis; L-isoleucine from 2-oxobutanoate: step 3/4. It participates in amino-acid biosynthesis; L-valine biosynthesis; L-valine from pyruvate: step 3/4. Its function is as follows. Functions in the biosynthesis of branched-chain amino acids. Catalyzes the dehydration of (2R,3R)-2,3-dihydroxy-3-methylpentanoate (2,3-dihydroxy-3-methylvalerate) into 2-oxo-3-methylpentanoate (2-oxo-3-methylvalerate) and of (2R)-2,3-dihydroxy-3-methylbutanoate (2,3-dihydroxyisovalerate) into 2-oxo-3-methylbutanoate (2-oxoisovalerate), the penultimate precursor to L-isoleucine and L-valine, respectively. The polypeptide is Dihydroxy-acid dehydratase (Leptothrix cholodnii (strain ATCC 51168 / LMG 8142 / SP-6) (Leptothrix discophora (strain SP-6))).